The chain runs to 498 residues: ATP synthase subunit beta, chloroplastic (498 aa).

172-179 serves as a coordination point for ATP; the sequence is GGAGVGKT.

Belongs to the ATPase alpha/beta chains family. As to quaternary structure, F-type ATPases have 2 components, CF(1) - the catalytic core - and CF(0) - the membrane proton channel. CF(1) has five subunits: alpha(3), beta(3), gamma(1), delta(1), epsilon(1). CF(0) has four main subunits: a(1), b(1), b'(1) and c(9-12).

The protein localises to the plastid. The protein resides in the chloroplast thylakoid membrane. The enzyme catalyses ATP + H2O + 4 H(+)(in) = ADP + phosphate + 5 H(+)(out). In terms of biological role, produces ATP from ADP in the presence of a proton gradient across the membrane. The catalytic sites are hosted primarily by the beta subunits. The protein is ATP synthase subunit beta, chloroplastic of Licuala grandis (Ruffled fan palm).